A 371-amino-acid chain; its full sequence is Polygalacturonase (371 aa).

Residues 1 to 19 form the signal peptide; sequence MPSYLRNLVWATLAAGLVS. Positions 20-34 are excised as a propeptide; it reads AAPTPSRVSDLTKKS. Cys-38 and Cys-53 form a disulfide bridge. PbH1 repeat units follow at residues 95-117, 165-195, 196-217, 218-238, 247-268, 276-298, and 310-355; these read GPLIKISGSDITVEAADGAVINA, SDNLIIDGVTIDNSDGDENGGHNTDGFDISE, STGVTIRNAVVKNQDDCIAINS, GQNIYFTGGTCSGGHGLSIGS, VKNVTITDSTVTDSANGVRIKT, VSDVTFSDITVSGITDYGIVIEQ, and TSGV…DITS. The Proton donor role is filled by Asp-210. Cys-212 and Cys-228 form a disulfide bridge. His-232 is an active-site residue. Asn-249 is a glycosylation site (N-linked (GlcNAc...) asparagine). 2 disulfides stabilise this stretch: Cys-338/Cys-343 and Cys-362/Cys-371.

It belongs to the glycosyl hydrolase 28 family.

It is found in the secreted. The catalysed reaction is (1,4-alpha-D-galacturonosyl)n+m + H2O = (1,4-alpha-D-galacturonosyl)n + (1,4-alpha-D-galacturonosyl)m.. This Penicillium janthinellum (Penicillium vitale) protein is Polygalacturonase.